The chain runs to 537 residues: RNA polymerase sigma-54 factor 2 (537 aa).

The tract at residues 52–90 (ANDEASGGEAPAEAGQFSDSDGGHNDEPGGGPGEAFEPG) is disordered. Residues 55–66 (EASGGEAPAEAG) show a composition bias toward low complexity. Residues 403–422 (NLKAVADAIQMHESTVSRVT) constitute a DNA-binding region (H-T-H motif). Positions 492–500 (ARRTVAKYR) match the RPON box motif. The disordered stretch occupies residues 507–537 (SSVQRRRDKQSALGNVLSTAMSDRSRNPEPA). A compositionally biased stretch (polar residues) spans 518-528 (ALGNVLSTAMS).

This sequence belongs to the sigma-54 factor family.

Its function is as follows. Sigma factors are initiation factors that promote the attachment of RNA polymerase to specific initiation sites and are then released. This sigma factor is responsible for the expression of the nitrogen fixation genes. This Bradyrhizobium diazoefficiens (strain JCM 10833 / BCRC 13528 / IAM 13628 / NBRC 14792 / USDA 110) protein is RNA polymerase sigma-54 factor 2 (rpoN2).